The sequence spans 490 residues: Membrane-bound lytic murein transglycosylase F (490 aa).

An N-terminal signal peptide occupies residues 1–32; the sequence is MFALTAYRLRCAAWLLATGIFLLLAGCSEAKA. The tract at residues 33–269 is non-LT domain; it reads PTALERVQKE…RLKDRYYGHV (237 aa). Residues 270 to 490 form an LT domain region; sequence DVLGYVGAYT…PEEDSGDEKL (221 aa). The active site involves E316. A disordered region spans residues 467–490; that stretch reads AESGLHLPGVNKTRPEEDSGDEKL. Residues 479–490 show a composition bias toward basic and acidic residues; that stretch reads TRPEEDSGDEKL.

It in the N-terminal section; belongs to the bacterial solute-binding protein 3 family. The protein in the C-terminal section; belongs to the transglycosylase Slt family.

It is found in the cell outer membrane. The enzyme catalyses Exolytic cleavage of the (1-&gt;4)-beta-glycosidic linkage between N-acetylmuramic acid (MurNAc) and N-acetylglucosamine (GlcNAc) residues in peptidoglycan, from either the reducing or the non-reducing ends of the peptidoglycan chains, with concomitant formation of a 1,6-anhydrobond in the MurNAc residue.. Its function is as follows. Murein-degrading enzyme that degrades murein glycan strands and insoluble, high-molecular weight murein sacculi, with the concomitant formation of a 1,6-anhydromuramoyl product. Lytic transglycosylases (LTs) play an integral role in the metabolism of the peptidoglycan (PG) sacculus. Their lytic action creates space within the PG sacculus to allow for its expansion as well as for the insertion of various structures such as secretion systems and flagella. The protein is Membrane-bound lytic murein transglycosylase F of Pseudomonas aeruginosa (strain ATCC 15692 / DSM 22644 / CIP 104116 / JCM 14847 / LMG 12228 / 1C / PRS 101 / PAO1).